A 209-amino-acid chain; its full sequence is A-type ATP synthase subunit D (209 aa).

The protein belongs to the V-ATPase D subunit family. Has multiple subunits with at least A(3), B(3), C, D, E, F, H, I and proteolipid K(x).

It localises to the cell membrane. Its function is as follows. Component of the A-type ATP synthase that produces ATP from ADP in the presence of a proton gradient across the membrane. In Methanoregula boonei (strain DSM 21154 / JCM 14090 / 6A8), this protein is A-type ATP synthase subunit D.